The sequence spans 701 residues: Ubiquitin thioesterase zranb1-A (701 aa).

3 consecutive RanBP2-type zinc fingers follow at residues 3-33, 79-108, and 143-173; these read EHGIKWGCEYCTYENWPSAIKCTMCRAPRPS, PSSKWSCQICTYLNWPRAIRCTQCLSQRRT, and IKGQHWTCSACTYENCAKAKKCVVCDHPTPN. Zn(2+) contacts are provided by C10, C13, C24, C27, C85, C88, C99, and C102. The span at 108 to 121 shows a compositional bias: polar residues; sequence TRSPTESPQSSGSG. The tract at residues 108-129 is disordered; that stretch reads TRSPTESPQSSGSGLRSIPSPI. 4 residues coordinate Zn(2+): C150, C153, C164, and C167. The interval 198–219 is disordered; it reads WRGGCSSSNSQRRSPPTSKRDS. Polar residues predominate over residues 202–214; that stretch reads CSSSNSQRRSPPT. 2 ANK repeats span residues 253-283 and 306-333; these read RKTDWLFLNACVGIVEGDLSAVESYKTSGGD and YTLVHLSIRFQRQDMLAILLTEVSQHAA. The OTU domain maps to 425–585; that stretch reads LYALWNRTAG…RGHFSALVAM (161 aa). C436 acts as the Nucleophile in catalysis. The active-site Proton acceptor is H578.

Belongs to the peptidase C64 family.

It is found in the cytoplasm. The protein localises to the nucleus. The enzyme catalyses Thiol-dependent hydrolysis of ester, thioester, amide, peptide and isopeptide bonds formed by the C-terminal Gly of ubiquitin (a 76-residue protein attached to proteins as an intracellular targeting signal).. Ubiquitin thioesterase, which specifically hydrolyzes 'Lys-29'-linked and 'Lys-33'-linked diubiquitin. Also cleaves 'Lys-63'-linked chains, but with 40-fold less efficiency compared to 'Lys-29'-linked ones. Positive regulator of the Wnt signaling pathway that deubiquitinates apc protein, a negative regulator of Wnt-mediated transcription. Acts as a regulator of autophagy by mediating deubiquitination of pik3c3/vps34, thereby promoting autophagosome maturation. Plays a role in the regulation of cell morphology and cytoskeletal organization. Required in the stress fiber dynamics and cell migration. This chain is Ubiquitin thioesterase zranb1-A (zranb1-a), found in Xenopus laevis (African clawed frog).